The sequence spans 493 residues: Glutamyl-tRNA(Gln) amidotransferase subunit A (493 aa).

Residues Lys-79 and Ser-159 each act as charge relay system in the active site. Ser-183 acts as the Acyl-ester intermediate in catalysis.

The protein belongs to the amidase family. GatA subfamily. Heterotrimer of A, B and C subunits.

The catalysed reaction is L-glutamyl-tRNA(Gln) + L-glutamine + ATP + H2O = L-glutaminyl-tRNA(Gln) + L-glutamate + ADP + phosphate + H(+). Allows the formation of correctly charged Gln-tRNA(Gln) through the transamidation of misacylated Glu-tRNA(Gln) in organisms which lack glutaminyl-tRNA synthetase. The reaction takes place in the presence of glutamine and ATP through an activated gamma-phospho-Glu-tRNA(Gln). The polypeptide is Glutamyl-tRNA(Gln) amidotransferase subunit A (Brucella suis (strain ATCC 23445 / NCTC 10510)).